The following is a 361-amino-acid chain: Chorismate synthase (361 aa).

Positions 48 and 54 each coordinate NADP(+). FMN-binding positions include 125–127, 238–239, G278, 293–297, and R319; these read RSS, NA, and KPTSS.

Belongs to the chorismate synthase family. As to quaternary structure, homotetramer. FMNH2 is required as a cofactor.

The enzyme catalyses 5-O-(1-carboxyvinyl)-3-phosphoshikimate = chorismate + phosphate. It functions in the pathway metabolic intermediate biosynthesis; chorismate biosynthesis; chorismate from D-erythrose 4-phosphate and phosphoenolpyruvate: step 7/7. In terms of biological role, catalyzes the anti-1,4-elimination of the C-3 phosphate and the C-6 proR hydrogen from 5-enolpyruvylshikimate-3-phosphate (EPSP) to yield chorismate, which is the branch point compound that serves as the starting substrate for the three terminal pathways of aromatic amino acid biosynthesis. This reaction introduces a second double bond into the aromatic ring system. In Salmonella typhi, this protein is Chorismate synthase.